Consider the following 505-residue polypeptide: MINRRIRVRFAPSPTGPLHIGGVRTALYNYLFARQHGGDMILRIEDTDSNRFVPGAEAYIIEALEWLGIKFDEGVGYGGRFGPYRQSERRDIYRTYVRQLLDSGRAYIAFDTPEELEARRAEVPNFQYDATTRGQMRNSLTLPAEEVERLVAEGTQYVVRFLVEPNLDVEVNDLIRGRVVINSSILDDKVLYKSADDLPTYHLANIVDDHLMEVSHVIRGEEWLPSAPLHVLLYRAFGWEDTMPRFAHLALLLKPEGNGKLSKRDGDRLGFPVFPLEWKDPQTGDISKGYRESGYLPEAVVNFLALLGWNPGNDQDVMSMDELIRLFDIEKCSKAGAKFDYEKGRWFNHQYIQRKDNAELAELFRPILRENGVVATDEKTAHVISLVKERVNFIGELWEQAGFFFIAPLSYDEKTVKKRWKEDTAKQLGELAELLDSHRSFAAEATEPTVKNWIETNGYHLGNIMNATRLALVGESKGPHIFDIMEVLGREETVGRIRRAIEVLG.

The short motif at 12–22 (PSPTGPLHIGG) is the 'HIGH' region element. The 'KMSKS' region signature appears at 260 to 264 (KLSKR). ATP is bound at residue lysine 263.

Belongs to the class-I aminoacyl-tRNA synthetase family. Glutamate--tRNA ligase type 1 subfamily. Monomer.

It is found in the cytoplasm. It carries out the reaction tRNA(Glu) + L-glutamate + ATP = L-glutamyl-tRNA(Glu) + AMP + diphosphate. In terms of biological role, catalyzes the attachment of glutamate to tRNA(Glu) in a two-step reaction: glutamate is first activated by ATP to form Glu-AMP and then transferred to the acceptor end of tRNA(Glu). This chain is Glutamate--tRNA ligase, found in Porphyromonas gingivalis (strain ATCC BAA-308 / W83).